The sequence spans 634 residues: Bacteriophytochrome (634 aa).

Cys-13 is a biliverdin IXalpha binding site. The 106-residue stretch at 13–118 (CAREPIHIPG…YPQQWLVEME (106 aa)) folds into the PAS 1 domain. Residues 13 to 514 (CAREPIHIPG…ELMERKRFQQ (502 aa)) form a photosensory core domain region. A GAF domain is found at 151–305 (RVAKGLRSLI…VTDAVARTLA (155 aa)). Residues 325–508 (TVREKLITDF…SLRVLIELME (184 aa)) form a phytochrome-specific (PHY) region. Positions 452–480 (WAGNPQLAKLEDIPNSRLSPRKSFDLWQQ) are tongue domain. One can recognise a PAS 2 domain in the interval 515 to 590 (DFTLLEASLS…ELLQDALRNG (76 aa)). Residues 515 to 634 (DFTLLEASLS…HWLLQLRDPE (120 aa)) form a PAS9, output module, not required to bind biliverdin IX-alpha, required for dimerization region.

In the N-terminal section; belongs to the phytochrome family. Forms head-to-head homodimers. Post-translationally, contains one covalently linked biliverdin IX-alpha chromophore; present in the crystal structure as a mixture of Pr and Meta-R configurations.

Photoreceptor which exists in two forms that are reversibly interconvertible by light: far-red light (733 nm) converts protein to the red-absorbing (Pr) form, while red light (630 nm) partly converts the protein to the far-red-absorbing (Pfr) form. Regulates virulence of X.campestris pv. campestris on its host plants, perhaps by fine-tuning expression to ambient light levels and/or spatial cues. The Pr form may sense light and partially inhibit virulence; in the dark (Pfr form) biofilm and xanathan production rise and bacteria are more virulent. Strains overexpressing this protein have significantly decreased amounts of extracellular beta-1,4-endoglucanase, produce less xanthin and have decreased transcription of genes involved in virulence such as endoglucanases, type 2 secretion systems, xanthan production and flagellar-dependent motility. This chain is Bacteriophytochrome (bphP), found in Xanthomonas campestris pv. campestris (strain 8004).